The following is a 159-amino-acid chain: Urease accessory protein UreE (159 aa).

Residues 140–159 form a disordered region; the sequence is GAYHGTGHHHHGHGHDPHHG.

It belongs to the UreE family.

Its subcellular location is the cytoplasm. In terms of biological role, involved in urease metallocenter assembly. Binds nickel. Probably functions as a nickel donor during metallocenter assembly. The protein is Urease accessory protein UreE of Sinorhizobium fredii (strain NBRC 101917 / NGR234).